The chain runs to 499 residues: Dual specificity protein kinase CLK2 (499 aa).

A disordered region spans residues 1 to 67 (MPHPRRYHSS…SYDDRSSDRR (67 aa)). The span at 8–21 (HSSERGSRGSYREH) shows a compositional bias: basic and acidic residues. Basic residues predominate over residues 22 to 33 (YRSRKHKRRRSR). The residue at position 34 (Ser-34) is a Phosphoserine; by PKB/AKT1. The span at 47–67 (REDSYHVRSRSSYDDRSSDRR) shows a compositional bias: basic and acidic residues. Ser-98 is modified (phosphoserine). The residue at position 99 (Tyr-99) is a Phosphotyrosine; by autocatalysis. The segment at 101–143 (YQRENSSYRSQRSSRRKHRRRRRRSRTFSRSSSQHSSRRAKSV) is disordered. The segment covering 112 to 127 (RSSRRKHRRRRRRSRT) has biased composition (basic residues). The residue at position 127 (Thr-127) is a Phosphothreonine; by PKB/AKT1. Ser-142 is subject to Phosphoserine; by autocatalysis. At Tyr-153 the chain carries Phosphotyrosine. The Protein kinase domain occupies 163–479 (YEIVSTLGEG…LGEALQHPFF (317 aa)). ATP contacts are provided by residues 169 to 177 (LGEGTFGRV) and Lys-193. Asp-290 acts as the Proton acceptor in catalysis. Phosphothreonine; by PKB/AKT2 is present on Thr-344.

Belongs to the protein kinase superfamily. CMGC Ser/Thr protein kinase family. Lammer subfamily. As to quaternary structure, interacts with RBMX. Interacts with AKT1 and UBL5. Autophosphorylates on all three types of residues. Phosphorylation on Ser-34 and Thr-127 by AKT1 is induced by ionizing radiation or insulin. Phosphorylation plays a critical role in cell proliferation following low dose radiation and prevents cell death following high dose radiation. Phosphorylation at Thr-344 by PKB/AKT2 induces its kinase activity which is required for its stability. The phosphorylation status at Ser-142 influences its subnuclear localization; inhibition of phosphorylation at Ser-142 results in accumulation in the nuclear speckle. Endothelial cells. Expressed in androgen-dependent prostate cancer cells.

The protein resides in the nucleus. It is found in the nucleus speckle. It carries out the reaction L-seryl-[protein] + ATP = O-phospho-L-seryl-[protein] + ADP + H(+). It catalyses the reaction L-threonyl-[protein] + ATP = O-phospho-L-threonyl-[protein] + ADP + H(+). The enzyme catalyses L-tyrosyl-[protein] + ATP = O-phospho-L-tyrosyl-[protein] + ADP + H(+). With respect to regulation, 5,6-dichloro-1-b-D-ribofuranosylbenzimidazole (DRB) inhibits autophosphorylation. TG003 inhibits its kinase activity and affects the regulation of alternative splicing mediated by phosphorylation of SR proteins. In terms of biological role, dual specificity kinase acting on both serine/threonine and tyrosine-containing substrates. Phosphorylates serine- and arginine-rich (SR) proteins of the spliceosomal complex. May be a constituent of a network of regulatory mechanisms that enable SR proteins to control RNA splicing and can cause redistribution of SR proteins from speckles to a diffuse nucleoplasmic distribution. Acts as a suppressor of hepatic gluconeogenesis and glucose output by repressing PPARGC1A transcriptional activity on gluconeogenic genes via its phosphorylation. Phosphorylates PPP2R5B thereby stimulating the assembly of PP2A phosphatase with the PPP2R5B-AKT1 complex leading to dephosphorylation of AKT1. Phosphorylates: PTPN1, SRSF1 and SRSF3. Regulates the alternative splicing of tissue factor (F3) pre-mRNA in endothelial cells. Phosphorylates PAGE4 at several serine and threonine residues and this phosphorylation attenuates the ability of PAGE4 to potentiate the transcriptional activator activity of JUN. In Homo sapiens (Human), this protein is Dual specificity protein kinase CLK2 (CLK2).